Consider the following 74-residue polypeptide: Sec-independent protein translocase protein TatA (74 aa).

A helical transmembrane segment spans residues 1 to 21; sequence MGSIGMTELLLIFGIIVLLFG.

This sequence belongs to the TatA/E family. As to quaternary structure, forms a complex with TatC.

It localises to the cell inner membrane. Part of the twin-arginine translocation (Tat) system that transports large folded proteins containing a characteristic twin-arginine motif in their signal peptide across membranes. TatA could form the protein-conducting channel of the Tat system. The protein is Sec-independent protein translocase protein TatA of Sulfurihydrogenibium sp. (strain YO3AOP1).